A 127-amino-acid polypeptide reads, in one-letter code: Large ribosomal subunit protein bL12 (127 aa).

A disordered region spans residues 93-127 (LVDEAPNPVSEGVSREEADDLKAQIEDAGGEVELQ). Positions 105-117 (VSREEADDLKAQI) are enriched in basic and acidic residues.

The protein belongs to the bacterial ribosomal protein bL12 family. As to quaternary structure, homodimer. Part of the ribosomal stalk of the 50S ribosomal subunit. Forms a multimeric L10(L12)X complex, where L10 forms an elongated spine to which 2 to 4 L12 dimers bind in a sequential fashion. Binds GTP-bound translation factors.

In terms of biological role, forms part of the ribosomal stalk which helps the ribosome interact with GTP-bound translation factors. Is thus essential for accurate translation. This chain is Large ribosomal subunit protein bL12, found in Salinibacter ruber (strain DSM 13855 / M31).